The following is a 359-amino-acid chain: Phosphoserine aminotransferase (359 aa).

Arginine 42 serves as a coordination point for L-glutamate. Pyridoxal 5'-phosphate contacts are provided by residues 76–77 (AS), tryptophan 102, threonine 152, aspartate 171, and glutamine 194. Lysine 195 bears the N6-(pyridoxal phosphate)lysine mark. Position 236 to 237 (236 to 237 (NT)) interacts with pyridoxal 5'-phosphate.

Belongs to the class-V pyridoxal-phosphate-dependent aminotransferase family. SerC subfamily. In terms of assembly, homodimer. The cofactor is pyridoxal 5'-phosphate.

It localises to the cytoplasm. It carries out the reaction O-phospho-L-serine + 2-oxoglutarate = 3-phosphooxypyruvate + L-glutamate. The catalysed reaction is 4-(phosphooxy)-L-threonine + 2-oxoglutarate = (R)-3-hydroxy-2-oxo-4-phosphooxybutanoate + L-glutamate. It functions in the pathway amino-acid biosynthesis; L-serine biosynthesis; L-serine from 3-phospho-D-glycerate: step 2/3. It participates in cofactor biosynthesis; pyridoxine 5'-phosphate biosynthesis; pyridoxine 5'-phosphate from D-erythrose 4-phosphate: step 3/5. Its function is as follows. Catalyzes the reversible conversion of 3-phosphohydroxypyruvate to phosphoserine and of 3-hydroxy-2-oxo-4-phosphonooxybutanoate to phosphohydroxythreonine. The chain is Phosphoserine aminotransferase from Ruthia magnifica subsp. Calyptogena magnifica.